A 586-amino-acid polypeptide reads, in one-letter code: MVVGKIIKISGPVVVAEGMKGSQMFEVVKVGNEGLTGEIIQLTEDEAIIQVYEETAGIKPGEGVTGTGAPLSVELGPGMLKAMYDGIQRPLNEIENATDSIYIPRGVSVPSISRVIKWDFEPTAAVGDEVITGDVIGTVQETASIVHKIMIPFGVSGKIKEIKSGSFTVEETVAVVETADGEKEIQMMQKWPVRKPRPSKGKQAPVIPLITGQRVEDTFFGLAKGGASAIPGPFGSGKTVTQHQLAKWSDVDVVVYIGCGERGNEMTEVIEEFPHLDDIKTGNKLMDRTVLIANTSNMPVAAREASVYTGITIAEYFRDQGLGVLLTADSTSRWAEAMREISGRLEEMPGEEGYPAYLSSKLAQFYERAGRVECLGSENKQGFVCIVGAVSPPGGDFSEPVTSNTLRIVKVFWALDANLARRRHFPAINWLTSYSLYIDDIAGWWQQNTAADWRSLRDEAMSLLQKEAELQEIVQLVGPDALPDRERVILEIARMLREDFLQQDAYHEVDSYCSPIKQYHMLKIIMTFYKKGLDAVAKGADPAGISAVTVKGDIARMKYLVEEEFVNTKVPEIINKMESELGALIK.

232 to 239 (GPFGSGKT) is an ATP binding site.

This sequence belongs to the ATPase alpha/beta chains family. Has multiple subunits with at least A(3), B(3), C, D, E, F, H, I and proteolipid K(x).

It is found in the cell membrane. The catalysed reaction is ATP + H2O + 4 H(+)(in) = ADP + phosphate + 5 H(+)(out). Functionally, component of the A-type ATP synthase that produces ATP from ADP in the presence of a proton gradient across the membrane. The A chain is the catalytic subunit. The polypeptide is A-type ATP synthase subunit A (Methanococcus maripaludis (strain C7 / ATCC BAA-1331)).